Here is a 404-residue protein sequence, read N- to C-terminus: 6-hydroxytryptophan 2,3-dioxygenase fscD (404 aa).

His341 contacts heme b.

It belongs to the indoleamine 2,3-dioxygenase family. It depends on heme as a cofactor.

The protein operates within secondary metabolite biosynthesis. 6-hydroxytryptophan 2,3-dioxygenase; part of the fragmented gene cluster that mediates the biosynthesis of fusarochromene, a tryptophan-derived metabolite closely related to a group of mycotoxins including fusarochromanone. Within the pathway, fscD is responsible of the cleavage of the pyrrole ring of 6-hydroxytryptophan. The first step of the pathway is the epimerization of L-tryptophan to D-tryptophan in the presence of the NRPS-like tryptophan epimerase fscC. D-tryptophan is subsequently hydroxylated by the tryptophan 6-hydroxylase fscE to yield 6-hydroxytryptophan. The pyrrole ring undergoes cleavaged by the tryptophan 2,3-dioxygenase fscD and is finally converted to 4-hydroxykyrunenine by the hydrolase fscH. The NRPS-like oxidoreductase fscA reduces the carboxyl group to primary alcohol and the DMATS-type prenyltransferase fscG performs prenylation, followed by the formation of a chromene ring catalyzed by the oxidoreductase fscI, which leads to desacetylfusarochromene. Epoxidation by fscF and rearrangement reactions of chromene double bonds convert compound desacetylfusarochromene to fusarochromanones. Although specific acetyltransferases were not found near the fsc gene cluster, several predicted enzymes containing the N-acetyltransferase superfamily domain are present in the genome of F.equiseti. These predicted enzymes may have the potential to convert desacetylfusarochromene to fusarochromene. This Fusarium equiseti (Fusarium scirpi) protein is 6-hydroxytryptophan 2,3-dioxygenase fscD.